Here is an 816-residue protein sequence, read N- to C-terminus: Phenylalanine--tRNA ligase beta subunit (816 aa).

The tRNA-binding domain occupies 40-148 (FEELAALKTG…EGMAHGQRFI (109 aa)). One can recognise a B5 domain in the interval 401 to 479 (KAVEVQRFSI…RIYGYDNVPT (79 aa)). The Mg(2+) site is built by aspartate 457, aspartate 463, glutamate 466, and glutamate 467. Residues 721 to 814 (PVYPAVKRDI…LTDRFGGSFR (94 aa)) enclose the FDX-ACB domain.

This sequence belongs to the phenylalanyl-tRNA synthetase beta subunit family. Type 1 subfamily. As to quaternary structure, tetramer of two alpha and two beta subunits. The cofactor is Mg(2+).

The protein resides in the cytoplasm. It carries out the reaction tRNA(Phe) + L-phenylalanine + ATP = L-phenylalanyl-tRNA(Phe) + AMP + diphosphate + H(+). This Desulfotalea psychrophila (strain LSv54 / DSM 12343) protein is Phenylalanine--tRNA ligase beta subunit.